A 379-amino-acid polypeptide reads, in one-letter code: Putative FBD-associated F-box protein At5g38570 (379 aa).

Positions 1 to 47 constitute an F-box domain; sequence MDNINGLPDDLLVKILSFVPTYVAVSTCVLSKRWEFLWMWLPNLEFV. The FBD domain occupies 295–345; it reads CWNQPSSVLECLLSSLKILNWSAYFGRPQDRDIAVYILKNACHLKTATFLT.

This chain is Putative FBD-associated F-box protein At5g38570, found in Arabidopsis thaliana (Mouse-ear cress).